The sequence spans 560 residues: MFS siderochrome iron transporter 1 (560 aa).

The N-linked (GlcNAc...) asparagine glycan is linked to Asn29. 11 consecutive transmembrane segments (helical) span residues Leu53–Val73, Leu90–Ala110, Val115–Met135, Val146–Met166, Met177–Gly194, Phe211–Phe231, Val264–Val284, Trp291–Leu311, Pro331–Ile351, Ala354–Leu374, and Phe379–Pro399. An N-linked (GlcNAc...) asparagine glycan is attached at Asn404. A run of 3 helical transmembrane segments spans residues Ile407–Cys427, Val441–Ala461, and Val522–Val542.

The protein belongs to the major facilitator superfamily.

The protein localises to the membrane. Its function is as follows. Major facilitator transporter involved in siderophore transport. The chain is MFS siderochrome iron transporter 1 from Ajellomyces capsulatus (Darling's disease fungus).